The following is a 431-amino-acid chain: Citrate synthase (431 aa).

Catalysis depends on residues histidine 306 and aspartate 364.

It belongs to the citrate synthase family.

The enzyme catalyses oxaloacetate + acetyl-CoA + H2O = citrate + CoA + H(+). Its pathway is carbohydrate metabolism; tricarboxylic acid cycle; isocitrate from oxaloacetate: step 1/2. The polypeptide is Citrate synthase (gltA) (Bartonella henselae (strain ATCC 49882 / DSM 28221 / CCUG 30454 / Houston 1) (Rochalimaea henselae)).